Consider the following 246-residue polypeptide: Phycocyanobilin:ferredoxin oxidoreductase (246 aa).

The protein belongs to the HY2 family.

It carries out the reaction (2R,3Z)-phycocyanobilin + 4 oxidized [2Fe-2S]-[ferredoxin] = biliverdin IXalpha + 4 reduced [2Fe-2S]-[ferredoxin] + 4 H(+). Its function is as follows. Catalyzes the four-electron reduction of biliverdin IX-alpha (2-electron reduction at both the A and D rings); the reaction proceeds via an isolatable 2-electron intermediate, 181,182-dihydrobiliverdin. The chain is Phycocyanobilin:ferredoxin oxidoreductase from Synechococcus sp. (strain CC9902).